We begin with the raw amino-acid sequence, 420 residues long: D-tagatose-1,6-bisphosphate aldolase subunit GatZ (420 aa).

The protein belongs to the GatZ/KbaZ family. GatZ subfamily. As to quaternary structure, forms a complex with GatY.

It participates in carbohydrate metabolism; D-tagatose 6-phosphate degradation; D-glyceraldehyde 3-phosphate and glycerone phosphate from D-tagatose 6-phosphate: step 2/2. In terms of biological role, component of the tagatose-1,6-bisphosphate aldolase GatYZ that is required for full activity and stability of the Y subunit. Could have a chaperone-like function for the proper and stable folding of GatY. When expressed alone, GatZ does not show any aldolase activity. Is involved in the catabolism of galactitol. The sequence is that of D-tagatose-1,6-bisphosphate aldolase subunit GatZ from Escherichia coli (strain SMS-3-5 / SECEC).